The sequence spans 253 residues: FAS1 domain-containing protein CAGL0M08734g (253 aa).

Residues 1–16 form the signal peptide; sequence MVALKYVLVPVALVAA. Residues 84-248 form the FAS1 domain; sequence DIYLDSQISV…GVILVIDATL (165 aa).

The protein localises to the vacuole. In Candida glabrata (strain ATCC 2001 / BCRC 20586 / JCM 3761 / NBRC 0622 / NRRL Y-65 / CBS 138) (Yeast), this protein is FAS1 domain-containing protein CAGL0M08734g.